The chain runs to 315 residues: Ribosomal RNA small subunit methyltransferase H (315 aa).

S-adenosyl-L-methionine-binding positions include 35-37 (GGH), Asp-55, Phe-80, Asp-102, and Gln-109.

The protein belongs to the methyltransferase superfamily. RsmH family.

It is found in the cytoplasm. The catalysed reaction is cytidine(1402) in 16S rRNA + S-adenosyl-L-methionine = N(4)-methylcytidine(1402) in 16S rRNA + S-adenosyl-L-homocysteine + H(+). Specifically methylates the N4 position of cytidine in position 1402 (C1402) of 16S rRNA. The sequence is that of Ribosomal RNA small subunit methyltransferase H from Shewanella pealeana (strain ATCC 700345 / ANG-SQ1).